Consider the following 508-residue polypeptide: Cobalamin biosynthesis protein CobIJ (508 aa).

Residues 1–243 (MSARGTLWGV…AMLPGGRRRA (243 aa)) are precorrin-2 C20-methyltransferase. Positions 244–508 (LLTGTVAVVG…TATKSSRHSD (265 aa)) are precorrin-3 methylase. The disordered stretch occupies residues 489 to 508 (PRRYPEAGRATATKSSRHSD).

This sequence belongs to the precorrin methyltransferase family.

The catalysed reaction is precorrin-2 + S-adenosyl-L-methionine = precorrin-3A + S-adenosyl-L-homocysteine + H(+). It catalyses the reaction precorrin-3B + S-adenosyl-L-methionine = precorrin-4 + S-adenosyl-L-homocysteine + 3 H(+). It participates in cofactor biosynthesis; adenosylcobalamin biosynthesis; cob(II)yrinate a,c-diamide from precorrin-2 (aerobic route): step 1/10. It functions in the pathway cofactor biosynthesis; adenosylcobalamin biosynthesis; cob(II)yrinate a,c-diamide from precorrin-2 (aerobic route): step 3/10. Functionally, methylates precorrin-2 at the C-20 position to produce precorrin-3A. In Mycobacterium bovis (strain ATCC BAA-935 / AF2122/97), this protein is Cobalamin biosynthesis protein CobIJ (cobIJ).